Reading from the N-terminus, the 559-residue chain is ATP-dependent RNA helicase HAS1 (559 aa).

The disordered stretch occupies residues 1–90 (MAPRSQSKSQ…TSEAEADEPG (90 aa)). Basic and acidic residues-rich tracts occupy residues 9-22 (SQRE…REDA) and 55-75 (PDQK…ELTK). The Q motif motif lies at 93–121 (YSFEKADFSEPTMKAIKEMGFQKMTKVQA). The Helicase ATP-binding domain maps to 124-300 (IPPLLAGRDV…RISLRPGPLY (177 aa)). 137–144 (AKTGSGKT) serves as a coordination point for ATP. The DEAD box motif lies at 247 to 250 (DEAD). Residues 314-484 (GLEQGYVVCD…NVQSQLTKLI (171 aa)) enclose the Helicase C-terminal domain.

This sequence belongs to the DEAD box helicase family. DDX18/HAS1 subfamily. In terms of assembly, associates in the nucleolus with the 60S and pre-60S ribosomal subunits.

Its subcellular location is the nucleus. It localises to the nucleolus. It carries out the reaction ATP + H2O = ADP + phosphate + H(+). ATP-dependent RNA helicase involved in 40S ribosomal subunit biogenesis. Required for the processing and cleavage of 35S pre-rRNA at sites A0, A1, and A2, leading to mature 18S rRNA. This chain is ATP-dependent RNA helicase HAS1 (HAS1), found in Lodderomyces elongisporus (strain ATCC 11503 / CBS 2605 / JCM 1781 / NBRC 1676 / NRRL YB-4239) (Yeast).